Reading from the N-terminus, the 181-residue chain is Isopentenyl-diphosphate Delta-isomerase (181 aa).

Mn(2+) is bound by residues His-29 and His-36. Residues 34–167 (PLHLAFSCYL…GWAISPWAAE (134 aa)) enclose the Nudix hydrolase domain. Cys-71 is an active-site residue. His-73 provides a ligand contact to Mn(2+). Glu-91 contributes to the Mg(2+) binding site. Residues Glu-118 and Glu-120 each coordinate Mn(2+). Glu-120 is a catalytic residue.

It belongs to the IPP isomerase type 1 family. Requires Mg(2+) as cofactor. The cofactor is Mn(2+).

The protein resides in the cytoplasm. The catalysed reaction is isopentenyl diphosphate = dimethylallyl diphosphate. Its pathway is isoprenoid biosynthesis; dimethylallyl diphosphate biosynthesis; dimethylallyl diphosphate from isopentenyl diphosphate: step 1/1. Catalyzes the 1,3-allylic rearrangement of the homoallylic substrate isopentenyl (IPP) to its highly electrophilic allylic isomer, dimethylallyl diphosphate (DMAPP). The protein is Isopentenyl-diphosphate Delta-isomerase of Mycolicibacterium vanbaalenii (strain DSM 7251 / JCM 13017 / BCRC 16820 / KCTC 9966 / NRRL B-24157 / PYR-1) (Mycobacterium vanbaalenii).